The primary structure comprises 55 residues: Large ribosomal subunit protein bL33 (55 aa).

Belongs to the bacterial ribosomal protein bL33 family.

In Novosphingobium aromaticivorans (strain ATCC 700278 / DSM 12444 / CCUG 56034 / CIP 105152 / NBRC 16084 / F199), this protein is Large ribosomal subunit protein bL33.